Here is a 171-residue protein sequence, read N- to C-terminus: Sorcin (171 aa).

4 consecutive EF-hand domains span residues 3–38 (MDTN…GLGT), 40–69 (LNIR…LGLF), 70–105 (KYVQ…FGYH), and 106–140 (LSPQ…LQTL). 15 residues coordinate Ca(2+): Asp-16, Asp-18, Ser-20, Ser-22, Glu-27, Asp-53, Asp-55, Asn-57, Thr-59, Glu-64, Asp-83, Asp-85, Ser-87, Ser-89, and Glu-94.

The protein resides in the cytoplasm. Functionally, calcium-binding protein. The protein is Sorcin of Schistosoma japonicum (Blood fluke).